Reading from the N-terminus, the 419-residue chain is Gamma-glutamyl phosphate reductase (419 aa).

This sequence belongs to the gamma-glutamyl phosphate reductase family.

It localises to the cytoplasm. The enzyme catalyses L-glutamate 5-semialdehyde + phosphate + NADP(+) = L-glutamyl 5-phosphate + NADPH + H(+). Its pathway is amino-acid biosynthesis; L-proline biosynthesis; L-glutamate 5-semialdehyde from L-glutamate: step 2/2. Catalyzes the NADPH-dependent reduction of L-glutamate 5-phosphate into L-glutamate 5-semialdehyde and phosphate. The product spontaneously undergoes cyclization to form 1-pyrroline-5-carboxylate. In Nitratidesulfovibrio vulgaris (strain ATCC 29579 / DSM 644 / CCUG 34227 / NCIMB 8303 / VKM B-1760 / Hildenborough) (Desulfovibrio vulgaris), this protein is Gamma-glutamyl phosphate reductase.